The following is a 432-amino-acid chain: 3-phosphoshikimate 1-carboxyvinyltransferase (432 aa).

Lys-22, Ser-23, and Arg-27 together coordinate 3-phosphoshikimate. Lys-22 contributes to the phosphoenolpyruvate binding site. Residues Gly-96 and Arg-127 each contribute to the phosphoenolpyruvate site. The 3-phosphoshikimate site is built by Ser-173, Ser-174, Gln-175, Ser-201, Asp-316, Asn-339, and Lys-343. Gln-175 contacts phosphoenolpyruvate. Asp-316 functions as the Proton acceptor in the catalytic mechanism. Positions 347, 391, and 416 each coordinate phosphoenolpyruvate.

It belongs to the EPSP synthase family. In terms of assembly, monomer.

Its subcellular location is the cytoplasm. The catalysed reaction is 3-phosphoshikimate + phosphoenolpyruvate = 5-O-(1-carboxyvinyl)-3-phosphoshikimate + phosphate. Its pathway is metabolic intermediate biosynthesis; chorismate biosynthesis; chorismate from D-erythrose 4-phosphate and phosphoenolpyruvate: step 6/7. Catalyzes the transfer of the enolpyruvyl moiety of phosphoenolpyruvate (PEP) to the 5-hydroxyl of shikimate-3-phosphate (S3P) to produce enolpyruvyl shikimate-3-phosphate and inorganic phosphate. This is 3-phosphoshikimate 1-carboxyvinyltransferase from Histophilus somni (Haemophilus somnus).